The primary structure comprises 132 residues: QTATQLLKVAHKYRPETKQEKKQRLLARAEKKAAXKGDVPTKRPPVLRAGVNTVTTLVENKKAQLVVIAHDVDPIELVVFLPALCRKMGVPYCIIKGKARLGRLVHRKTCTTVAFTQVNSEDKGALAKLVEA.

K8 bears the N6-acetyllysine; alternate mark. A Glycyl lysine isopeptide (Lys-Gly) (interchain with G-Cter in SUMO2); alternate cross-link involves residue K8. K36 participates in a covalent cross-link: Glycyl lysine isopeptide (Lys-Gly) (interchain with G-Cter in SUMO2). K128 is modified (N6-acetyllysine).

This sequence belongs to the eukaryotic ribosomal protein eL8 family. In terms of assembly, component of the large ribosomal subunit. Interacts with CRY1. Interacts with DICER1, AGO2, TARBP2, MOV10 and EIF6; they form a large RNA-induced silencing complex (RISC).

The protein localises to the cytoplasm. Its function is as follows. Component of the large ribosomal subunit. The ribosome is a large ribonucleoprotein complex responsible for the synthesis of proteins in the cell. The chain is Large ribosomal subunit protein eL8 (RPL7A) from Sus scrofa (Pig).